Consider the following 184-residue polypeptide: Large ribosomal subunit protein eL13 (184 aa).

Positions 28–53 (PARKERRRQARKAKAQRIAPRPASGP) are disordered. Over residues 31 to 42 (KERRRQARKAKA) the composition is skewed to basic residues.

It belongs to the eukaryotic ribosomal protein eL13 family.

The protein is Large ribosomal subunit protein eL13 (RPL13) of Schistosoma mansoni (Blood fluke).